Here is a 445-residue protein sequence, read N- to C-terminus: ATP synthase subunit b-delta (445 aa).

Residues 1–168 (MSIFIGQLIG…PSSVVIDTAA (168 aa)) are ATP synthase subunit b. The chain crosses the membrane as a helical span at residues 3–23 (IFIGQLIGFAVIAFIIVKWVV). The ATP synthase subunit delta stretch occupies residues 169 to 445 (TSRLRAASRQ…LAAAQTGLPD (277 aa)).

In the N-terminal section; belongs to the ATPase B chain family. The protein in the C-terminal section; belongs to the ATPase delta chain family. F-type ATPases have 2 components, F(1) - the catalytic core - and F(0) - the membrane proton channel. F(1) has five subunits: alpha(3), beta(3), gamma(1), delta(1), epsilon(1). F(0) has three main subunits: a(1), b(2) and c(10-14). The alpha and beta chains form an alternating ring which encloses part of the gamma chain. F(1) is attached to F(0) by a central stalk formed by the gamma and epsilon chains, while a peripheral stalk is formed by the delta and b chains.

The protein localises to the cell membrane. F(1)F(0) ATP synthase produces ATP from ADP in the presence of a proton or sodium gradient. F-type ATPases consist of two structural domains, F(1) containing the extramembraneous catalytic core and F(0) containing the membrane proton channel, linked together by a central stalk and a peripheral stalk. During catalysis, ATP synthesis in the catalytic domain of F(1) is coupled via a rotary mechanism of the central stalk subunits to proton translocation. Its function is as follows. This fusion protein includes a component of the F(0) channel (subunit b) and of the F(1) subunit (subunit delta). Two copies of subunit b and one of delta together form the peripheral 'stator' stalk which links F(1) to F(0). The polypeptide is ATP synthase subunit b-delta (atpFH) (Mycolicibacterium smegmatis (strain ATCC 700084 / mc(2)155) (Mycobacterium smegmatis)).